The chain runs to 310 residues: MTTDNQQDTAAAAVPTRSGFVALIGATNAGKSTLINRLVGAKVSIVSHKVQTTRAIVRGIAIHDNAQIVFMDTPGIFKPRRRLDRAMVTTAWGGAKDADLIMLLIDSERGIKGDADTILEGLKDVHQPKVLVLNKVDQVRREDLLKLAAAANEVVAFERTFMISALTGSGCEDVMDYLAERLPEGPWYYPEDQISDLPMRQLAAEITREKLFLRLHQELPYASHVETEKWEERKDGSVRIEQVIYVERDSQKKIALGKGGEAIKAISTAARKEISEILEQPVHLFLFVKVRENWGDDPERFREMGLDFPK.

Residues 17-184 (RSGFVALIGA…MDYLAERLPE (168 aa)) enclose the Era-type G domain. Residues 25 to 32 (GATNAGKS) are G1. 25-32 (GATNAGKS) is a binding site for GTP. A G2 region spans residues 51 to 55 (QTTRA). A G3 region spans residues 72–75 (DTPG). GTP-binding positions include 72 to 76 (DTPGI) and 134 to 137 (NKVD). Residues 134–137 (NKVD) form a G4 region. A G5 region spans residues 163 to 165 (ISA). In terms of domain architecture, KH type-2 spans 215 to 292 (LHQELPYASH…HLFLFVKVRE (78 aa)).

The protein belongs to the TRAFAC class TrmE-Era-EngA-EngB-Septin-like GTPase superfamily. Era GTPase family. In terms of assembly, monomer.

The protein resides in the cytoplasm. The protein localises to the cell inner membrane. Functionally, an essential GTPase that binds both GDP and GTP, with rapid nucleotide exchange. Plays a role in 16S rRNA processing and 30S ribosomal subunit biogenesis and possibly also in cell cycle regulation and energy metabolism. The chain is GTPase Era from Sinorhizobium medicae (strain WSM419) (Ensifer medicae).